The primary structure comprises 178 residues: uncharacterized protein (178 aa).

4 helical membrane-spanning segments follow: residues 3-23, 56-76, 101-121, and 150-170; these read IPIILTLMLFSLGFIFGFISI, IFLMLAGSITFGLSTFINLIF, LILPHGIFEISAMLISAVAGF, and LSLISIILIVIAAFIEVYITP.

To M.jannaschii MJ0706 and Synechocystis PCC 6803 slr1478.

Its subcellular location is the cell membrane. This is an uncharacterized protein from Methanocaldococcus jannaschii (strain ATCC 43067 / DSM 2661 / JAL-1 / JCM 10045 / NBRC 100440) (Methanococcus jannaschii).